Reading from the N-terminus, the 307-residue chain is Ornithine carbamoyltransferase (307 aa).

Carbamoyl phosphate-binding positions include 53-56 (STRT), Gln-80, Arg-104, and 131-134 (HPCQ). Residues Asn-162, Asp-220, and 224–225 (SM) contribute to the L-ornithine site. Carbamoyl phosphate is bound by residues 260-261 (CL) and Arg-288.

The protein belongs to the aspartate/ornithine carbamoyltransferase superfamily. OTCase family.

It localises to the cytoplasm. It catalyses the reaction carbamoyl phosphate + L-ornithine = L-citrulline + phosphate + H(+). It functions in the pathway amino-acid biosynthesis; L-arginine biosynthesis; L-arginine from L-ornithine and carbamoyl phosphate: step 1/3. Functionally, reversibly catalyzes the transfer of the carbamoyl group from carbamoyl phosphate (CP) to the N(epsilon) atom of ornithine (ORN) to produce L-citrulline. This chain is Ornithine carbamoyltransferase, found in Nitrosomonas eutropha (strain DSM 101675 / C91 / Nm57).